A 906-amino-acid polypeptide reads, in one-letter code: Centromere protein C (906 aa).

Composition is skewed to polar residues over residues 56–74 (SLTS…SSSK) and 87–96 (SSRTGEASLQ). Disordered regions lie at residues 56-115 (SLTS…NEVH) and 141-169 (QKAA…NKNI). Serine 71 and serine 94 each carry phosphoserine. Residues 97–108 (ASAEPSEAAGGS) are compositionally biased toward low complexity. Residues lysine 150 and lysine 182 each participate in a glycyl lysine isopeptide (Lys-Gly) (interchain with G-Cter in SUMO2) cross-link. The disordered stretch occupies residues 197-224 (VEDNLSKGQEGTSSEITQKRDDLSSDVQ). Polar residues predominate over residues 202–212 (SKGQEGTSSEI). Residues 228-242 (KKNFSELFLETVKRK) carry the Nuclear localization signal motif. Glycyl lysine isopeptide (Lys-Gly) (interchain with G-Cter in SUMO2) cross-links involve residues lysine 229, lysine 240, lysine 242, and lysine 266. Disordered stretches follow at residues 294-320 (RHLS…KSHS), 341-596 (AQLS…SLAI), and 623-671 (EYTS…EQDQ). Phosphoserine is present on residues serine 302, serine 344, serine 363, and serine 404. Residues 402–424 (GQSSWENSNVSNTGQDKLQINSK) show a composition bias toward polar residues. The span at 426–450 (NMKDCEEVRNEPNPKKQKPALENKK) shows a compositional bias: basic and acidic residues. The short motif at 449 to 466 (KKKTNSTQTNKEKSGKKF) is the Nuclear localization signal element. The span at 465 to 474 (KFFSGGSKNK) shows a compositional bias: low complexity. Positions 481–494 (TLTSRRSCRISQRP) are enriched in polar residues. Phosphoserine is present on serine 495. Residues 496 to 512 (EWWRVKSDESSVDRNPS) show a composition bias toward basic and acidic residues. Residue lysine 501 forms a Glycyl lysine isopeptide (Lys-Gly) (interchain with G-Cter in SUMO2) linkage. Serine 505 carries the post-translational modification Phosphoserine. Residues 523 to 546 (NKKKQTKRNHVSKRAGKKPGSSKR) are compositionally biased toward basic residues. The Nuclear localization signal motif lies at 525–540 (KKQTKRNHVSKRAGKK). Residues 626–637 (SKTQMESASNSE) show a composition bias toward polar residues. Lysine 640 is covalently cross-linked (Glycyl lysine isopeptide (Lys-Gly) (interchain with G-Cter in SUMO2)). Residues serine 647 and serine 673 each carry the phosphoserine modification. Lysine 692 participates in a covalent cross-link: Glycyl lysine isopeptide (Lys-Gly) (interchain with G-Cter in SUMO2). The tract at residues 702 to 724 (VRRSNRIRLKPLEYWRGERVDYQ) is MIF2 homology domain II. 2 positions are modified to phosphoserine: serine 728 and serine 737. Residues 744-762 (KIKAQRNLGKVNKKVTKKP) carry the Nuclear localization signal motif. A Glycyl lysine isopeptide (Lys-Gly) (interchain with G-Cter in SUMO2) cross-link involves residue lysine 770. Positions 853 to 906 (LVFYVNFGDLLCTLHETPYKLTTGDSFYVPSGNHYNIKNLLNVESSLLFTQIKR) are MIF2 homology domain III.

It belongs to the CENP-C/MIF2 family. As to quaternary structure, oligomer. Component of the CENPA-NAC complex, at least composed of CENPA, CENPC, CENPH, CENPM, CENPN, CENPT and CENPU. The CENPA-NAC complex interacts with the CENPA-CAD complex, composed of CENPI, CENPK, CENPL, CENPO, CENPP, CENPQ, CENPR and CENPS. Binds to DAXX. Interacts with DNMT3B. Interacts directly with CENPA. Identified in a centromere complex containing histones H2A, H2B and H4, and at least CENPA, CENPB, CENPC, CENPT, CENPN, HJURP, SUPT16H, SSRP1 and RSF1. Interacts with MEIKIN.

Its subcellular location is the nucleus. The protein resides in the chromosome. The protein localises to the centromere. It is found in the kinetochore. In terms of biological role, component of the CENPA-NAC (nucleosome-associated) complex, a complex that plays a central role in assembly of kinetochore proteins, mitotic progression and chromosome segregation. The CENPA-NAC complex recruits the CENPA-CAD (nucleosome distal) complex and may be involved in incorporation of newly synthesized CENPA into centromeres. CENPC recruits DNA methylation and DNMT3B to both centromeric and pericentromeric satellite repeats and regulates the histone code in these regions. The polypeptide is Centromere protein C (Cenpc) (Mus musculus (Mouse)).